A 100-amino-acid polypeptide reads, in one-letter code: Urease subunit gamma (100 aa).

It belongs to the urease gamma subunit family. As to quaternary structure, heterotrimer of UreA (gamma), UreB (beta) and UreC (alpha) subunits. Three heterotrimers associate to form the active enzyme.

It localises to the cytoplasm. It catalyses the reaction urea + 2 H2O + H(+) = hydrogencarbonate + 2 NH4(+). The protein operates within nitrogen metabolism; urea degradation; CO(2) and NH(3) from urea (urease route): step 1/1. In Variovorax paradoxus (strain S110), this protein is Urease subunit gamma.